The chain runs to 156 residues: FAD synthase (156 aa).

Residues 16-17 (TF), 21-24 (HPGH), Asp-101, and Tyr-129 each bind ATP.

It belongs to the archaeal FAD synthase family. In terms of assembly, homodimer. The cofactor is a divalent metal cation.

It catalyses the reaction FMN + ATP + H(+) = FAD + diphosphate. Its pathway is cofactor biosynthesis; FAD biosynthesis; FAD from FMN: step 1/1. Functionally, catalyzes the transfer of the AMP portion of ATP to flavin mononucleotide (FMN) to produce flavin adenine dinucleotide (FAD) coenzyme. The chain is FAD synthase from Methanococcus aeolicus (strain ATCC BAA-1280 / DSM 17508 / OCM 812 / Nankai-3).